Consider the following 159-residue polypeptide: 6,7-dimethyl-8-ribityllumazine synthase (159 aa).

Residues Phe-22, 57–59 (TYE), and 81–83 (TII) each bind 5-amino-6-(D-ribitylamino)uracil. 86–87 (ST) contributes to the (2S)-2-hydroxy-3-oxobutyl phosphate binding site. The active-site Proton donor is His-89. Met-114 lines the 5-amino-6-(D-ribitylamino)uracil pocket. A (2S)-2-hydroxy-3-oxobutyl phosphate-binding site is contributed by Arg-128.

The protein belongs to the DMRL synthase family. As to quaternary structure, forms an icosahedral capsid composed of 60 subunits, arranged as a dodecamer of pentamers.

The enzyme catalyses (2S)-2-hydroxy-3-oxobutyl phosphate + 5-amino-6-(D-ribitylamino)uracil = 6,7-dimethyl-8-(1-D-ribityl)lumazine + phosphate + 2 H2O + H(+). It functions in the pathway cofactor biosynthesis; riboflavin biosynthesis; riboflavin from 2-hydroxy-3-oxobutyl phosphate and 5-amino-6-(D-ribitylamino)uracil: step 1/2. Its function is as follows. Catalyzes the formation of 6,7-dimethyl-8-ribityllumazine by condensation of 5-amino-6-(D-ribitylamino)uracil with 3,4-dihydroxy-2-butanone 4-phosphate. This is the penultimate step in the biosynthesis of riboflavin. This is 6,7-dimethyl-8-ribityllumazine synthase from Buchnera aphidicola subsp. Schizaphis graminum (strain Sg).